Reading from the N-terminus, the 187-residue chain is UPF0301 protein VC_0467 (187 aa).

It belongs to the UPF0301 (AlgH) family.

This Vibrio cholerae serotype O1 (strain ATCC 39315 / El Tor Inaba N16961) protein is UPF0301 protein VC_0467.